We begin with the raw amino-acid sequence, 80 residues long: Exodeoxyribonuclease 7 small subunit (80 aa).

It belongs to the XseB family. In terms of assembly, heterooligomer composed of large and small subunits.

It is found in the cytoplasm. It carries out the reaction Exonucleolytic cleavage in either 5'- to 3'- or 3'- to 5'-direction to yield nucleoside 5'-phosphates.. Bidirectionally degrades single-stranded DNA into large acid-insoluble oligonucleotides, which are then degraded further into small acid-soluble oligonucleotides. The polypeptide is Exodeoxyribonuclease 7 small subunit (Photobacterium profundum (strain SS9)).